We begin with the raw amino-acid sequence, 638 residues long: Guanylate-binding protein 7 (638 aa).

The segment at 1-310 is GTPase domain (Globular); sequence MASGPNMEAP…DAINSGDVPC (310 aa). The region spanning 35 to 277 is the GB1/RHD3-type G domain; the sequence is TQPVVVVAIV…FCSYIFSNSK (243 aa). Residues 45–52, 67–69, and 97–101 each bind GTP; these read GLYRTGKS, LGT, and DTEGL. Residues 311–638 form an interaction with the CYBA-CYBB complex region; sequence LENAVTTLAQ…TQNSDKVRKL (328 aa). The C-terminal tail; required for its localization to cytoplasmic vesicle stretch occupies residues 590-638; that stretch reads SSLGAKILDGFGDVLISVVPGSGKYFGLGLKILSSQMNQTQNSDKVRKL.

It belongs to the TRAFAC class dynamin-like GTPase superfamily. GB1/RHD3 GTPase family. GB1 subfamily. In terms of assembly, monomer and dimer. Interacts with CYBA, CYBA-CYBB complex and ATG4B. Interacts (via GB1/RHD3-type G domain) with NCF2 and NCF2-NCF4 complex.

It localises to the cytoplasmic vesicle membrane. The enzyme catalyses GTP + H2O = GDP + phosphate + H(+). It catalyses the reaction GDP + H2O = GMP + phosphate + H(+). Inhibited by orthovanadate, berylium fluoride and aluminum flouride. Interferon (IFN)-inducible GTPase that plays important roles in innate immunity against a diverse range of bacterial, viral and protozoan pathogens. Hydrolyzes GTP to GMP in two consecutive cleavage reactions and predominantly uses GTP and not GDP or GMP as the substrate. Following infection, recruited to the pathogen-containing vacuoles or vacuole-escaped bacteria and acts as a positive regulator of inflammasome assembly by promoting the release of inflammasome ligands from bacteria. Acts by promoting lysis of pathogen-containing vacuoles, releasing pathogens into the cytosol. Following pathogen release in the cytosol, promotes recruitment of proteins that mediate bacterial cytolysis, such as Gm12250/Irgb10: this liberates ligands that are detected by inflammasomes, such as lipopolysaccharide (LPS) that activates the non-canonical CASP4/CASP11 inflammasome or double-stranded DNA (dsDNA) that activates the AIM2 inflammasome. Also promotes IFN-gamma-mediated host defense against bacterial infections by regulating oxidative responses and bacteriolytic peptide generation. May help to assemble NADPH oxidase on phagosomal membranes by acting as a bridging protein between NADPH oxidase cytosolic subunits NCF2-NCF4 and the membrane subunits CYBA-CYBB. Participates along with GBP1 in trafficking monoubiquinated protein cargo to autolysosomes for generating ubiquitin-derived antimicrobial peptides. Facilitates influenza A virus replication by inhibiting the activation of NF-kappaB and JAK-STAT signaling pathways and the expression of type I, type III interferons and pro-inflammatory cytokines. Confers protection to several pathogens, including the bacterial pathogens Listeria monocytogenes and Mycobacterium bovis BCG as well as the protozoan pathogen Toxoplasma gondii. Required for disruption of the parasitophorous vacuole formed following T.gondii infection and subsequent killing of the parasite. The chain is Guanylate-binding protein 7 (Gbp7) from Mus musculus (Mouse).